A 166-amino-acid chain; its full sequence is Ribosome maturation factor RimM (166 aa).

One can recognise a PRC barrel domain in the interval 91–165 (DDEFYHADLI…RIVADPPEGL (75 aa)).

It belongs to the RimM family. As to quaternary structure, binds ribosomal protein uS19.

The protein resides in the cytoplasm. An accessory protein needed during the final step in the assembly of 30S ribosomal subunit, possibly for assembly of the head region. Essential for efficient processing of 16S rRNA. May be needed both before and after RbfA during the maturation of 16S rRNA. It has affinity for free ribosomal 30S subunits but not for 70S ribosomes. The sequence is that of Ribosome maturation factor RimM from Dinoroseobacter shibae (strain DSM 16493 / NCIMB 14021 / DFL 12).